The primary structure comprises 129 residues: Class I hydrophobin 11 (129 aa).

The first 19 residues, M1–A19, serve as a signal peptide directing secretion. Disulfide bonds link C48–C106, C55–C100, C56–C89, and C107–C122.

Belongs to the fungal hydrophobin family. Self-assembles to form functional amyloid fibrils called rodlets. Self-assembly into fibrillar rodlets occurs spontaneously at hydrophobic:hydrophilic interfaces and the rodlets further associate laterally to form amphipathic monolayers.

The protein localises to the secreted. It localises to the cell wall. Functionally, aerial growth, conidiation, and dispersal of filamentous fungi in the environment rely upon a capability of their secreting small amphipathic proteins called hydrophobins (HPBs) with low sequence identity. Class I can self-assemble into an outermost layer of rodlet bundles on aerial cell surfaces, conferring cellular hydrophobicity that supports fungal growth, development and dispersal; whereas Class II form highly ordered films at water-air interfaces through intermolecular interactions but contribute nothing to the rodlet structure. The polypeptide is Class I hydrophobin 11 (Pleurotus ostreatus (strain PC15) (Oyster mushroom)).